Consider the following 120-residue polypeptide: NAD(P)H-quinone oxidoreductase subunit 3, chloroplastic (120 aa).

The next 3 membrane-spanning stretches (helical) occupy residues 9 to 29, 64 to 84, and 88 to 108; these read IFWA…FISG, MFAL…PWAM, and VLGV…IVGS.

This sequence belongs to the complex I subunit 3 family. As to quaternary structure, NDH is composed of at least 16 different subunits, 5 of which are encoded in the nucleus.

It is found in the plastid. The protein resides in the chloroplast thylakoid membrane. It carries out the reaction a plastoquinone + NADH + (n+1) H(+)(in) = a plastoquinol + NAD(+) + n H(+)(out). It catalyses the reaction a plastoquinone + NADPH + (n+1) H(+)(in) = a plastoquinol + NADP(+) + n H(+)(out). Functionally, NDH shuttles electrons from NAD(P)H:plastoquinone, via FMN and iron-sulfur (Fe-S) centers, to quinones in the photosynthetic chain and possibly in a chloroplast respiratory chain. The immediate electron acceptor for the enzyme in this species is believed to be plastoquinone. Couples the redox reaction to proton translocation, and thus conserves the redox energy in a proton gradient. This is NAD(P)H-quinone oxidoreductase subunit 3, chloroplastic from Vitis vinifera (Grape).